Here is a 70-residue protein sequence, read N- to C-terminus: Enhancer of split m6 protein (70 aa).

The protein is Enhancer of split m6 protein of Drosophila melanogaster (Fruit fly).